Consider the following 434-residue polypeptide: Nicotinate phosphoribosyltransferase (434 aa).

His242 is subject to Phosphohistidine; by autocatalysis.

It belongs to the NAPRTase family. Transiently phosphorylated on a His residue during the reaction cycle. Phosphorylation strongly increases the affinity for substrates and increases the rate of nicotinate D-ribonucleotide production. Dephosphorylation regenerates the low-affinity form of the enzyme, leading to product release.

The catalysed reaction is nicotinate + 5-phospho-alpha-D-ribose 1-diphosphate + ATP + H2O = nicotinate beta-D-ribonucleotide + ADP + phosphate + diphosphate. It participates in cofactor biosynthesis; NAD(+) biosynthesis; nicotinate D-ribonucleotide from nicotinate: step 1/1. In terms of biological role, catalyzes the synthesis of beta-nicotinate D-ribonucleotide from nicotinate and 5-phospho-D-ribose 1-phosphate at the expense of ATP. In Brucella melitensis biotype 1 (strain ATCC 23456 / CCUG 17765 / NCTC 10094 / 16M), this protein is Nicotinate phosphoribosyltransferase.